Consider the following 55-residue polypeptide: Neurotoxin BmKX-A1-S31 (55 aa).

A signal peptide spans 1-23 (MKIFFAVLVILVLFSMLIWTAYG). Intrachain disulfides connect Cys-30/Cys-45, Cys-36/Cys-50, and Cys-39/Cys-53.

Expressed by the venom gland.

The protein resides in the secreted. The protein is Neurotoxin BmKX-A1-S31 of Olivierus martensii (Manchurian scorpion).